The following is a 136-amino-acid chain: Large ribosomal subunit protein uL13 (136 aa).

The protein belongs to the universal ribosomal protein uL13 family. In terms of assembly, part of the 50S ribosomal subunit.

Its function is as follows. This protein is one of the early assembly proteins of the 50S ribosomal subunit, although it is not seen to bind rRNA by itself. It is important during the early stages of 50S assembly. The sequence is that of Large ribosomal subunit protein uL13 from Thermoplasma acidophilum (strain ATCC 25905 / DSM 1728 / JCM 9062 / NBRC 15155 / AMRC-C165).